Consider the following 278-residue polypeptide: Deoxyuridine 5'-triphosphate nucleotidohydrolase (278 aa).

Substrate contacts are provided by residues 171 to 173 (RSG) and 273 to 274 (FG).

It belongs to the dUTPase family. It depends on Mg(2+) as a cofactor.

The enzyme catalyses dUTP + H2O = dUMP + diphosphate + H(+). Involved in nucleotide metabolism: produces dUMP, the immediate precursor of thymidine nucleotides and decreases the intracellular concentration of dUTP to avoid uracil incorporation into viral DNA. The sequence is that of Deoxyuridine 5'-triphosphate nucleotidohydrolase from Homo sapiens (Human).